A 558-amino-acid chain; its full sequence is Atlastin-1 (558 aa).

A disordered region spans residues 1–27; the sequence is MAKNRRDRNSWGGFSEKTYEWSSEEEE. The N-terminal hypervariable region (HVR) stretch occupies residues 1 to 34; sequence MAKNRRDRNSWGGFSEKTYEWSSEEEEPVKKAGP. Over 1–449 the chain is Cytoplasmic; sequence MAKNRRDRNS…NIFHAARTPA (449 aa). Phosphoserine is present on residues S10, S22, and S23. In terms of domain architecture, GB1/RHD3-type G spans 64–309; sequence DKEVVAVSVA…LIPWLLSPES (246 aa). Positions 77, 78, 79, 80, 81, 82, 148, 217, 218, 276, and 279 each coordinate GDP. GTP contacts are provided by R77, K78, G79, K80, S81, and F82. S81 is a binding site for Mg(2+). R217, D218, and V276 together coordinate GTP. Residues 347 to 438 form a 3HB (three-helix bundle) domain region; sequence MLQATAEANN…YIQYIKHNDS (92 aa). The residue at position 395 (K395) is an N6-acetyllysine. The stretch at 412-439 forms a coiled coil; it reads EFSRRYLQQLESEIDELYIQYIKHNDSK. The interval 439 to 447 is linker; it reads KNIFHAART. A helical transmembrane segment spans residues 450–470; that stretch reads TLFVVIFITYVIAGVTGFIGL. A topological domain (lumenal) is located at residue D471. Residues 472–492 traverse the membrane as a helical segment; sequence IIASLCNMIMGLTLITLCTWA. The Cytoplasmic segment spans residues 493–558; it reads YIRYSGEYRE…STEQSEKKKM (66 aa). The segment at 521-558 is autoinhibitory domain; the sequence is NEALYKLYSAAATHRHLYHQAFPTPKSESTEQSEKKKM.

The protein belongs to the TRAFAC class dynamin-like GTPase superfamily. GB1/RHD3 GTPase family. GB1 subfamily. Monomeric and homodimeric. The homodimer, transiently formed by two molecules on opposing membranes, is the active form mediating ER membrane fusion. Interacts with REEP1, REEP5, RTN3 and RTN4 (via the transmembrane region); these proteins are involved in endoplasmic reticulum tubular network organization. Interacts with ZFYVE27; both proteins are involved in endoplasmic reticulum tubular network organization. Interacts with ARL6IP1; both proteins are involved in endoplasmic reticulum tubular network organization. Interacts with SPAST; the interaction is direct, could recruit SPAST to Golgi membranes. Interacts (via N-terminal region) with MAP4K4 (via CNH regulatory domain). May interact with TMED2. Interacts with CPT1C. Post-translationally, phosphorylated. Phosphorylation, by different kinases, of the N-terminal hypervariable region (HVR) regulates the ATL1-mediated membrane tethering step.

The protein resides in the endoplasmic reticulum membrane. Its subcellular location is the golgi apparatus membrane. It is found in the cell projection. The protein localises to the axon. The enzyme catalyses GTP + H2O = GDP + phosphate + H(+). Functionally, atlastin-1 (ATL1) is a membrane-anchored GTPase that mediates the GTP-dependent fusion of endoplasmic reticulum (ER) membranes, maintaining the continuous ER network. It facilitates the formation of three-way junctions where ER tubules intersect. Two atlastin-1 on neighboring ER tubules bind GTP and form loose homodimers through the GB1/RHD3-type G domains and 3HB regions. Upon GTP hydrolysis, the 3HB regions tighten, pulling the membranes together to drive their fusion. After fusion, the homodimer disassembles upon release of inorganic phosphate (Pi). Subsequently, GDP dissociates, resetting the monomers to a conformation ready for a new fusion cycle. May also regulate more or less directly Golgi biogenesis. Indirectly regulates axonal development. This is Atlastin-1 from Pongo abelii (Sumatran orangutan).